The primary structure comprises 131 residues: Large ribosomal subunit protein uL22c (131 aa).

The protein belongs to the universal ribosomal protein uL22 family. Part of the 50S ribosomal subunit.

It localises to the plastid. Its function is as follows. This protein binds specifically to 23S rRNA. The globular domain of the protein is located near the polypeptide exit tunnel on the outside of the subunit, while an extended beta-hairpin is found that lines the wall of the exit tunnel in the center of the 70S ribosome. This chain is Large ribosomal subunit protein uL22c (rpl22), found in Aneura mirabilis (Parasitic liverwort).